Reading from the N-terminus, the 141-residue chain is Nucleoside diphosphate kinase (141 aa).

ATP-binding residues include K11, F59, R87, T93, R104, and N114. H117 serves as the catalytic Pros-phosphohistidine intermediate.

Belongs to the NDK family. As to quaternary structure, homotetramer. The cofactor is Mg(2+).

The protein localises to the cytoplasm. The catalysed reaction is a 2'-deoxyribonucleoside 5'-diphosphate + ATP = a 2'-deoxyribonucleoside 5'-triphosphate + ADP. The enzyme catalyses a ribonucleoside 5'-diphosphate + ATP = a ribonucleoside 5'-triphosphate + ADP. In terms of biological role, major role in the synthesis of nucleoside triphosphates other than ATP. The ATP gamma phosphate is transferred to the NDP beta phosphate via a ping-pong mechanism, using a phosphorylated active-site intermediate. In Haemophilus influenzae (strain 86-028NP), this protein is Nucleoside diphosphate kinase.